A 154-amino-acid chain; its full sequence is UPF0756 membrane protein YtwI (154 aa).

Helical transmembrane passes span 8 to 28 (FLIL…LFAV), 54 to 74 (WGVT…EIGF), 87 to 107 (WIAL…LTLL), and 117 to 137 (LVIG…GPLI).

The protein belongs to the UPF0756 family.

The protein localises to the cell membrane. The polypeptide is UPF0756 membrane protein YtwI (ytwI) (Bacillus subtilis (strain 168)).